Reading from the N-terminus, the 905-residue chain is DNA gyrase subunit A (905 aa).

Residues 35-524 enclose the Topo IIA-type catalytic domain; it reads IPDVRDGLKP…GEFDQDIEDL (490 aa). Y123 (O-(5'-phospho-DNA)-tyrosine intermediate) is an active-site residue. A GyrA-box motif is present at residues 551-557; that stretch reads QKRGGKG.

The protein belongs to the type II topoisomerase GyrA/ParC subunit family. Heterotetramer, composed of two GyrA and two GyrB chains. In the heterotetramer, GyrA contains the active site tyrosine that forms a transient covalent intermediate with DNA, while GyrB binds cofactors and catalyzes ATP hydrolysis.

It localises to the cytoplasm. It catalyses the reaction ATP-dependent breakage, passage and rejoining of double-stranded DNA.. Functionally, a type II topoisomerase that negatively supercoils closed circular double-stranded (ds) DNA in an ATP-dependent manner to modulate DNA topology and maintain chromosomes in an underwound state. Negative supercoiling favors strand separation, and DNA replication, transcription, recombination and repair, all of which involve strand separation. Also able to catalyze the interconversion of other topological isomers of dsDNA rings, including catenanes and knotted rings. Type II topoisomerases break and join 2 DNA strands simultaneously in an ATP-dependent manner. In Rickettsia prowazekii (strain Madrid E), this protein is DNA gyrase subunit A.